Reading from the N-terminus, the 238-residue chain is Sugar fermentation stimulation protein homolog (238 aa).

It belongs to the SfsA family.

The chain is Sugar fermentation stimulation protein homolog from Klebsiella pneumoniae (strain 342).